Reading from the N-terminus, the 88-residue chain is Small ribosomal subunit protein bS20 (88 aa).

It belongs to the bacterial ribosomal protein bS20 family. As to quaternary structure, part of the 30S ribosomal subunit.

In terms of biological role, binds directly to 16S ribosomal RNA. This is Small ribosomal subunit protein bS20 (rpsT) from Bacillus subtilis (strain 168).